Consider the following 382-residue polypeptide: Sialidase (382 aa).

Arg37 serves as a coordination point for substrate. The Proton acceptor role is filled by Asp62. BNR repeat units lie at residues Ala71–Tyr82, Ile140–Asn151, and Ile208–Met219. Residue Arg245 coordinates substrate. The BNR 4 repeat unit spans residues Tyr255–Ile266. The active-site Nucleophile is Tyr347.

It belongs to the glycosyl hydrolase 33 family.

The protein resides in the secreted. It catalyses the reaction Hydrolysis of alpha-(2-&gt;3)-, alpha-(2-&gt;6)-, alpha-(2-&gt;8)- glycosidic linkages of terminal sialic acid residues in oligosaccharides, glycoproteins, glycolipids, colominic acid and synthetic substrates.. Sialidases have been suggested to be pathogenic factors in microbial infections. The sequence is that of Sialidase (nanH) from Clostridium perfringens.